The following is a 134-amino-acid chain: Profilin-5 (134 aa).

Cysteines 13 and 118 form a disulfide. The short motif at 84-100 (AVIRGKKGSGGITIKKT) is the Involved in PIP2 interaction element. Position 114 is a phosphothreonine (Thr-114).

Belongs to the profilin family. Occurs in many kinds of cells as a complex with monomeric actin in a 1:1 ratio. Phosphorylated by MAP kinases.

The protein resides in the cytoplasm. Its subcellular location is the cytoskeleton. Its function is as follows. Binds to actin and affects the structure of the cytoskeleton. At high concentrations, profilin prevents the polymerization of actin, whereas it enhances it at low concentrations. The polypeptide is Profilin-5 (Olea europaea (Common olive)).